Reading from the N-terminus, the 228-residue chain is Cytidylate kinase (228 aa).

12–20 (GPSGSGKGT) contacts ATP.

The protein belongs to the cytidylate kinase family. Type 1 subfamily.

It is found in the cytoplasm. It catalyses the reaction CMP + ATP = CDP + ADP. It carries out the reaction dCMP + ATP = dCDP + ADP. The protein is Cytidylate kinase of Pseudomonas entomophila (strain L48).